A 200-amino-acid chain; its full sequence is Protein DMP7 (200 aa).

The next 4 helical transmembrane spans lie at 37 to 57, 69 to 89, 129 to 149, and 167 to 187; these read LSNL…PVLT, WLTC…SFTD, ILDF…SMFD, and ILTS…LAFP.

Belongs to the plant DMP1 protein family. In terms of tissue distribution, expressed in leaves, stems, flowers, siliques and roots, especially in the vasculature.

Its subcellular location is the endoplasmic reticulum membrane. Its function is as follows. Involved in membrane remodeling. This Arabidopsis thaliana (Mouse-ear cress) protein is Protein DMP7.